Consider the following 351-residue polypeptide: V-type proton ATPase subunit d2 (351 aa).

The protein belongs to the V-ATPase V0D/AC39 subunit family. As to quaternary structure, V-ATPase is a heteromultimeric enzyme composed of a peripheral catalytic V1 complex (components A to H) attached to an integral membrane V0 proton pore complex (components: a, c, c'', d and e).

Its subcellular location is the vacuole membrane. In terms of biological role, subunit of the integral membrane V0 complex of vacuolar ATPase. Vacuolar ATPase is responsible for acidifying a variety of intracellular compartments in eukaryotic cells, thus providing most of the energy required for transport processes in the vacuolar system. This is V-type proton ATPase subunit d2 (VHA-d2) from Arabidopsis thaliana (Mouse-ear cress).